The primary structure comprises 331 residues: MTTTTHSTAAIMSLLDEAEWRQTQMDVGGLIQASALGKVALRYAVRKLMKRGARLRHDSGLYVCICDPSYEFLQMNLSKISWLERHCPPLDQELIMFGVIEAWEEASVRPTRQLVLFMTPKWDVFAYDSGILFFLAPSMAQFWHGAIVLEYWNALFPVEVRSHVRQHAHTMDDLVMVFHQLDYEKQVLEARRDKNTEGPRTFAKSVNSYVRAILESERRIREGKIPMTFVDRDSLRANSLAHIQATGAQPSHAPAQRVLSAPPSLPSPVSEEDPAAAATPPSSAATTPPSSVVPASVESELSSSPPLPPVVVKDVMYTAGEGDVVQMVVVV.

Residues 246 to 309 form a disordered region; sequence TGAQPSHAPA…ELSSSPPLPP (64 aa). Over residues 275-304 the composition is skewed to low complexity; that stretch reads AAAATPPSSAATTPPSSVVPASVESELSSS.

The protein belongs to the beta-herpesvirinae UL38 protein family. Interacts with host MDM2; this interaction leads to the stabilization of host TP53. Interacts with host TSC2; this interaction prevents host cell stress responses. Interacts with host USP24.

The protein localises to the host cytoplasm. The protein resides in the host nucleus. Plays a role in the inhibition of host apoptosis to facilitate efficient viral replication. Promotes stabilization and inactivation of host TP53 through interaction with host MDM2. Induces host mTORC1 activation by antagonizing the ability of host TSC1/2 to negatively regulate mTORC1. Thus, inhibits a growth regulatory pathway to facilitate viral replication. Prevents premature cell host cell death by blocking host ubiquitin-specific protease 24/USP24-mediated autophagic ferritin degradation in lysosomes thus maintaining lysosome integrity and cellular viability. Involved in the activation of host ENO2 leading to enhanced glycolysis and UDP-sugar metabolism in order to enable the expression of viral glycoproteins. The chain is Apoptosis inhibitor UL38 (UL38) from Human cytomegalovirus (strain Merlin) (HHV-5).